An 859-amino-acid chain; its full sequence is Glucans biosynthesis glucosyltransferase H (859 aa).

A run of 6 helical transmembrane segments spans residues 144–166 (YILLILMLGQTIVAGSYMKGILP), 200–222 (LLLFGILFCWVSAGFWTALMGFL), 523–545 (VMSYLSAPLWFFFLVLSTALLAV), 573–595 (VALFSTTIVLLFLPKLLSVILIW), 608–630 (VTVSMLLEMLFSVLLAPVRMLFH), and 684–706 (SFLWWLAPIVVSLMLSIPVSVIS).

This sequence belongs to the glycosyltransferase 2 family. OpgH subfamily.

It localises to the cell inner membrane. Its pathway is glycan metabolism; osmoregulated periplasmic glucan (OPG) biosynthesis. Functionally, involved in the biosynthesis of osmoregulated periplasmic glucans (OPGs). This chain is Glucans biosynthesis glucosyltransferase H, found in Pseudomonas syringae pv. tomato (strain ATCC BAA-871 / DC3000).